A 315-amino-acid polypeptide reads, in one-letter code: MSEQFEHISVLLHESVDGLAIKPDGIYIDGTFGRGGHSRLILSHLGENGRLYGIDRDPQAIAEAQTIDDPRFSIIHGPFSGMAQYMEERDLIGRVDGVLLDLGVSSPQLDDAERGFSFMRDGPLDMRMDPTSGISAAEWLAEAEADDIAWVLKEFGEERFAKRIARGIVEHRENPDKKPLTRTKELAALISDVSPFRDKHKHPATRSFQAIRIYINSELDEIETALNGAVKVLAPQGRLSVISFHSLEDRMVKRFIRKNSKGPEVPAGFPLTEDQIKALGSADLKMASKAIKPSKDELGDNKRARSSVLRLAERL.

Residues glycine 35–histidine 37, aspartate 55, phenylalanine 79, aspartate 101, and glutamine 108 each bind S-adenosyl-L-methionine.

It belongs to the methyltransferase superfamily. RsmH family.

The protein localises to the cytoplasm. The catalysed reaction is cytidine(1402) in 16S rRNA + S-adenosyl-L-methionine = N(4)-methylcytidine(1402) in 16S rRNA + S-adenosyl-L-homocysteine + H(+). Functionally, specifically methylates the N4 position of cytidine in position 1402 (C1402) of 16S rRNA. This is Ribosomal RNA small subunit methyltransferase H from Photobacterium profundum (strain SS9).